Reading from the N-terminus, the 971-residue chain is Exportin-2 (971 aa).

An Importin N-terminal domain is found at 29–102; sequence AEKFLESVEG…KANIVNLMLT (74 aa).

It belongs to the XPO2/CSE1 family. Interacts with cftr. Detected in larval gut, liver, exocrine pancreas and part of the brain and retina at 96 hpf.

The protein resides in the cytoplasm. It is found in the nucleus. Its subcellular location is the apical cell membrane. It localises to the basal cell membrane. The protein localises to the lateral cell membrane. Functionally, export receptor for importin alpha. Mediates importin-alpha re-export from the nucleus to the cytoplasm after import substrates have been released into the nucleoplasm. Negatively regulates fluid secretion and plays a role in fluid homeostasis by down-regulating cftr activity. The protein is Exportin-2 (cse1l) of Danio rerio (Zebrafish).